We begin with the raw amino-acid sequence, 77 residues long: Serine protease inhibitor 3 (77 aa).

Positions 1–17 (MMFTPLIVLTLLVLATA) are cleaved as a signal peptide. Cystine bridges form between cysteine 21-cysteine 53, cysteine 30-cysteine 48, cysteine 33-cysteine 44, and cysteine 55-cysteine 68. A TIL domain is found at 21-74 (CGPNEQWSGCPKCELQSGESDKPCATICGEPKCYCSPDKYRRIPDGRCIRKIQC).

Its subcellular location is the secreted. In terms of biological role, defends the organism against the host's proteinases. The protein is Serine protease inhibitor 3 of Anisakis simplex (Herring worm).